The primary structure comprises 669 residues: DNA ligase (669 aa).

Residues 34 to 38 (DAEYD), 83 to 84 (SL), and Glu114 contribute to the NAD(+) site. Lys116 (N6-AMP-lysine intermediate) is an active-site residue. 4 residues coordinate NAD(+): Arg137, Glu171, Lys287, and Lys311. Zn(2+) is bound by residues Cys405, Cys408, Cys423, and Cys428. A BRCT domain is found at 591-669 (NVESYFAGKT…EERFLQELNK (79 aa)).

This sequence belongs to the NAD-dependent DNA ligase family. LigA subfamily. The cofactor is Mg(2+). Mn(2+) is required as a cofactor.

The catalysed reaction is NAD(+) + (deoxyribonucleotide)n-3'-hydroxyl + 5'-phospho-(deoxyribonucleotide)m = (deoxyribonucleotide)n+m + AMP + beta-nicotinamide D-nucleotide.. Functionally, DNA ligase that catalyzes the formation of phosphodiester linkages between 5'-phosphoryl and 3'-hydroxyl groups in double-stranded DNA using NAD as a coenzyme and as the energy source for the reaction. It is essential for DNA replication and repair of damaged DNA. This Bacillus cereus (strain B4264) protein is DNA ligase.